The primary structure comprises 466 residues: Bifunctional NAD(P)H-hydrate repair enzyme Nnr (466 aa).

Positions 1 to 207 (MLSVYEKVNA…HLGVFNQIYE (207 aa)) are NAD(P)H-hydrate epimerase. The 200-residue stretch at 8 to 207 (VNALDKRAIE…HLGVFNQIYE (200 aa)) folds into the YjeF N-terminal domain. The segment at 56–60 (DNGGD) is NADPHX 1; for epimerase activity. K(+) contacts are provided by asparagine 57 and aspartate 120. The NADPHX 1; for epimerase activity stretch occupies residues 124–130 (GSHFKGK). A (6S)-NADPHX-binding site is contributed by aspartate 151. Serine 154 is a binding site for K(+). In terms of domain architecture, YjeF C-terminal spans 215-466 (LEKSDLKLPL…LDLIEKIKQL (252 aa)). The interval 215-466 (LEKSDLKLPL…LDLIEKIKQL (252 aa)) is ADP-dependent (S)-NAD(P)H-hydrate dehydratase. Glycine 300 lines the (6S)-NADPHX pocket. Positions 342 to 348 (HPKEFLS) are NADPHX 2; for dehydratase activity. Residues 385 to 389 (KGANT) and 404 to 413 (SVALAKAGSG) contribute to the ADP site. Aspartate 414 is a binding site for (6S)-NADPHX.

In the N-terminal section; belongs to the NnrE/AIBP family. The protein in the C-terminal section; belongs to the NnrD/CARKD family. Requires K(+) as cofactor.

The enzyme catalyses (6S)-NADHX + ADP = AMP + phosphate + NADH + H(+). The catalysed reaction is (6S)-NADPHX + ADP = AMP + phosphate + NADPH + H(+). It carries out the reaction (6R)-NADHX = (6S)-NADHX. It catalyses the reaction (6R)-NADPHX = (6S)-NADPHX. Bifunctional enzyme that catalyzes the epimerization of the S- and R-forms of NAD(P)HX and the dehydration of the S-form of NAD(P)HX at the expense of ADP, which is converted to AMP. This allows the repair of both epimers of NAD(P)HX, a damaged form of NAD(P)H that is a result of enzymatic or heat-dependent hydration. This Helicobacter pylori (strain ATCC 700392 / 26695) (Campylobacter pylori) protein is Bifunctional NAD(P)H-hydrate repair enzyme Nnr (nnr).